The sequence spans 347 residues: Eukaryotic translation initiation factor 3 subunit H (347 aa).

The MPN domain occupies 6 to 149 (VCIDSSVALK…PSSTGPQGHT (144 aa)). The segment at 136–155 (SDTDPSSTGPQGHTTTTPSG) is disordered. Residues 138–155 (TDPSSTGPQGHTTTTPSG) show a composition bias toward polar residues.

This sequence belongs to the eIF-3 subunit H family. As to quaternary structure, component of the eukaryotic translation initiation factor 3 (eIF-3) complex.

Its subcellular location is the cytoplasm. In terms of biological role, component of the eukaryotic translation initiation factor 3 (eIF-3) complex, which is involved in protein synthesis of a specialized repertoire of mRNAs and, together with other initiation factors, stimulates binding of mRNA and methionyl-tRNAi to the 40S ribosome. The eIF-3 complex specifically targets and initiates translation of a subset of mRNAs involved in cell proliferation. The protein is Eukaryotic translation initiation factor 3 subunit H of Yarrowia lipolytica (strain CLIB 122 / E 150) (Yeast).